We begin with the raw amino-acid sequence, 313 residues long: WUSCHEL-related homeobox 5 (313 aa).

The segment at 1-32 (METTTTTLGGGGGGRAGGFSDPPSPLSPPLSP) is disordered. Positions 8-17 (LGGGGGGRAG) are enriched in gly residues. Positions 22-31 (PPSPLSPPLS) are enriched in pro residues. A DNA-binding region (homeobox; WUS-type) is located at residues 40 to 104 (LANARWTPTK…NHKARQRQKQ (65 aa)). 2 disordered regions span residues 224–247 (AAGRGAAEAEGHGRRGGGAGGRET) and 271–313 (CAAV…SGGR). Low complexity predominate over residues 271–301 (CAAVSPTTPSASASFSWESESSDSPSSEAPP).

It belongs to the WUS homeobox family.

It is found in the nucleus. Functionally, transcription factor which may be involved in developmental processes. The protein is WUSCHEL-related homeobox 5 (WOX5) of Oryza sativa subsp. japonica (Rice).